We begin with the raw amino-acid sequence, 441 residues long: tRNA modification GTPase MnmE (441 aa).

(6S)-5-formyl-5,6,7,8-tetrahydrofolate contacts are provided by Arg-23, Glu-81, and Arg-121. Residues 219–366 (GFTVVLAGAP…LLDAIQAAAE (148 aa)) form the TrmE-type G domain. Residues 229–234 (NSGKST), 248–254 (SDSPGTT), and 273–276 (DTAG) each bind GTP. Mg(2+) is bound by residues Ser-233 and Thr-254. Residue Lys-441 coordinates (6S)-5-formyl-5,6,7,8-tetrahydrofolate.

It belongs to the TRAFAC class TrmE-Era-EngA-EngB-Septin-like GTPase superfamily. TrmE GTPase family. In terms of assembly, homodimer. Heterotetramer of two MnmE and two MnmG subunits. It depends on K(+) as a cofactor.

It localises to the cytoplasm. Functionally, exhibits a very high intrinsic GTPase hydrolysis rate. Involved in the addition of a carboxymethylaminomethyl (cmnm) group at the wobble position (U34) of certain tRNAs, forming tRNA-cmnm(5)s(2)U34. This is tRNA modification GTPase MnmE from Methylobacterium radiotolerans (strain ATCC 27329 / DSM 1819 / JCM 2831 / NBRC 15690 / NCIMB 10815 / 0-1).